The primary structure comprises 447 residues: Phosphoglucosamine mutase (447 aa).

The active-site Phosphoserine intermediate is the Ser100. Mg(2+) contacts are provided by Ser100, Asp240, Asp242, and Asp244. Phosphoserine is present on Ser100.

It belongs to the phosphohexose mutase family. Requires Mg(2+) as cofactor. In terms of processing, activated by phosphorylation.

The catalysed reaction is alpha-D-glucosamine 1-phosphate = D-glucosamine 6-phosphate. Its function is as follows. Catalyzes the conversion of glucosamine-6-phosphate to glucosamine-1-phosphate. This chain is Phosphoglucosamine mutase, found in Clostridium botulinum (strain Alaska E43 / Type E3).